The sequence spans 339 residues: Glyceraldehyde-3-phosphate dehydrogenase (339 aa).

NAD(+) is bound by residues 12 to 13 (RI), Asp35, and Lys84. D-glyceraldehyde 3-phosphate-binding positions include 155–157 (SCT), Thr186, 215–216 (TG), and Arg238. The active-site Nucleophile is Cys156. Residue Asn320 participates in NAD(+) binding.

It belongs to the glyceraldehyde-3-phosphate dehydrogenase family. In terms of assembly, homotetramer.

It localises to the cytoplasm. It catalyses the reaction D-glyceraldehyde 3-phosphate + phosphate + NAD(+) = (2R)-3-phospho-glyceroyl phosphate + NADH + H(+). It functions in the pathway carbohydrate degradation; glycolysis; pyruvate from D-glyceraldehyde 3-phosphate: step 1/5. This chain is Glyceraldehyde-3-phosphate dehydrogenase (GAPD), found in Mastigamoeba balamuthi (Phreatamoeba balamuthi).